A 727-amino-acid chain; its full sequence is Elongation factor 2 (727 aa).

One can recognise a tr-type G domain in the interval 19–260 (DQIRNMGICA…MAIKHLPNPL (242 aa)). GTP is bound by residues 28–35 (AHIDHGKT), 94–98 (DTPGH), and 148–151 (NKVD). His-603 bears the Diphthamide mark.

This sequence belongs to the TRAFAC class translation factor GTPase superfamily. Classic translation factor GTPase family. EF-G/EF-2 subfamily.

Its subcellular location is the cytoplasm. Catalyzes the GTP-dependent ribosomal translocation step during translation elongation. During this step, the ribosome changes from the pre-translocational (PRE) to the post-translocational (POST) state as the newly formed A-site-bound peptidyl-tRNA and P-site-bound deacylated tRNA move to the P and E sites, respectively. Catalyzes the coordinated movement of the two tRNA molecules, the mRNA and conformational changes in the ribosome. The polypeptide is Elongation factor 2 (Methanococcus maripaludis (strain C7 / ATCC BAA-1331)).